A 400-amino-acid polypeptide reads, in one-letter code: Phosphoglycerate kinase (400 aa).

Residues 21-23, Arg-36, 59-62, Arg-118, and Arg-151 each bind substrate; these read DFN and HLGR. ATP is bound by residues Lys-201, Gly-293, Glu-324, and 353–356; that span reads GGDS.

It belongs to the phosphoglycerate kinase family. As to quaternary structure, monomer.

It localises to the cytoplasm. It catalyses the reaction (2R)-3-phosphoglycerate + ATP = (2R)-3-phospho-glyceroyl phosphate + ADP. The protein operates within carbohydrate degradation; glycolysis; pyruvate from D-glyceraldehyde 3-phosphate: step 2/5. This chain is Phosphoglycerate kinase, found in Fervidobacterium nodosum (strain ATCC 35602 / DSM 5306 / Rt17-B1).